The sequence spans 151 residues: UPF0208 membrane protein YfbV (151 aa).

Topologically, residues 1-45 are cytoplasmic; the sequence is MSTPDNRSVNFFSLFCRGQHYSKTWPLEKRLAPVFVENRVIKMTR. A helical transmembrane segment spans residues 46-65; that stretch reads YAIRFMPPIAVFTLCWQIAL. The Periplasmic segment spans residues 66 to 68; sequence GGQ. Residues 69–91 form a helical membrane-spanning segment; sequence LGPAVATALFALSLPMQGLWWLG. Residues 92-151 are Cytoplasmic-facing; sequence KRSVTPLPPAILNWFYEVRGKLQESGQVLAPVEGKPDYQALADTLKRAFKQLDKTFLDDL.

The protein belongs to the UPF0208 family.

It localises to the cell inner membrane. The protein is UPF0208 membrane protein YfbV (yfbV) of Escherichia coli O6:H1 (strain CFT073 / ATCC 700928 / UPEC).